Reading from the N-terminus, the 241-residue chain is Endothelial protein C receptor (241 aa).

Residues 1–20 (MLTKFLSLLLLLLLLGCAFC) form the signal peptide. The Extracellular portion of the chain corresponds to 21-213 (NSDGSQSLHM…GSQTGRSYTS (193 aa)). N47, N64, N139, N165, and N175 each carry an N-linked (GlcNAc...) asparagine glycan. A helical membrane pass occupies residues 214-234 (LVLGILMGCFIIAGVAVGIFL). Residues 235–241 (CTGGRRC) lie on the Cytoplasmic side of the membrane.

The protein resides in the membrane. In terms of biological role, binds activated protein C. Enhances protein C activation by the thrombin-thrombomodulin complex; plays a role in the protein C pathway controlling blood coagulation. The polypeptide is Endothelial protein C receptor (Procr) (Rattus norvegicus (Rat)).